The primary structure comprises 180 residues: GTP cyclohydrolase 1 (180 aa).

C71, H74, and C142 together coordinate Zn(2+).

This sequence belongs to the GTP cyclohydrolase I family. In terms of assembly, toroid-shaped homodecamer, composed of two pentamers of five dimers.

It catalyses the reaction GTP + H2O = 7,8-dihydroneopterin 3'-triphosphate + formate + H(+). It functions in the pathway cofactor biosynthesis; 7,8-dihydroneopterin triphosphate biosynthesis; 7,8-dihydroneopterin triphosphate from GTP: step 1/1. The chain is GTP cyclohydrolase 1 from Helicobacter pylori (strain HPAG1).